The following is a 37-amino-acid chain: Large ribosomal subunit protein bL36c (37 aa).

This sequence belongs to the bacterial ribosomal protein bL36 family.

Its subcellular location is the plastid. The protein resides in the chloroplast. The sequence is that of Large ribosomal subunit protein bL36c from Stigeoclonium helveticum (Green alga).